The sequence spans 312 residues: Formate dehydrogenase iron-sulfur subunit (312 aa).

4Fe-4S ferredoxin-type domains follow at residues 35-65 (IAKL…SDIN), 97-129 (LEWL…QYAN), 130-159 (GIVD…MNPE), and 164-195 (YKCT…FGSK). Residues Cys-44, Cys-47, Cys-50, Cys-54, Cys-106, Cys-109, Cys-114, Cys-118, Cys-139, Cys-142, Cys-145, Cys-149, Cys-166, Cys-169, Cys-181, and Cys-185 each coordinate [4Fe-4S] cluster.

Formate dehydrogenase is a membrane-bound complex, formed by subunits alpha, beta and gamma. Requires [4Fe-4S] cluster as cofactor.

The protein localises to the cell membrane. Functionally, allows to use formate as major electron donor during aerobic respiration. The beta chain is an electron transfer unit containing 4 cysteine clusters involved in the formation of iron-sulfur centers. Electrons are transferred from the gamma chain to the molybdenum cofactor of the alpha subunit. The polypeptide is Formate dehydrogenase iron-sulfur subunit (fdxH) (Haemophilus influenzae (strain ATCC 51907 / DSM 11121 / KW20 / Rd)).